Consider the following 60-residue polypeptide: Short neurotoxin 1 (60 aa).

4 disulfide bridges follow: Cys-3/Cys-22, Cys-17/Cys-39, Cys-41/Cys-52, and Cys-53/Cys-58.

Belongs to the three-finger toxin family. Short-chain subfamily. Type I alpha-neurotoxin sub-subfamily. In terms of tissue distribution, expressed by the venom gland.

It is found in the secreted. Binds to muscle nicotinic acetylcholine receptor (nAChR) and inhibit acetylcholine from binding to the receptor, thereby impairing neuromuscular transmission. The protein is Short neurotoxin 1 of Dendroaspis polylepis polylepis (Black mamba).